The following is a 64-amino-acid chain: Alternative prion protein (64 aa).

Residues 1–22 form a disordered region; it reads MEHWGEPIPGTGQSWRQPLSTS. Residues 11–22 show a composition bias toward polar residues; it reads TGQSWRQPLSTS. A helical transmembrane segment spans residues 40-58; it reads WRWLGSAPWWWLGTATWWW.

The protein localises to the mitochondrion outer membrane. This Ovis aries (Sheep) protein is Alternative prion protein.